The chain runs to 253 residues: MTDIFARRATLARSVRLLSQFRYERSEPARFYGALAADTAAMVDDLWRAGHGESAAGRTLLDVGGGPGYFAAAFADAGVRYLGVEPDPGEMHAAGPVVAADTGTFVRASGMALPFADDSVDICLSSNVAEHVPRPWQLGAEMLRVTRPGGLAVLSYTVWLGPFGGHEMGLTHYLGGSRAAARYARKHGHPAKNNYGSSLFEVSVADGLAWAACTGAELAAFPRYHPRWAWWLTSVPVLREFLVSNLVLVLQPQ.

Belongs to the methyltransferase superfamily.

This is an uncharacterized protein from Mycobacterium avium (strain 104).